Reading from the N-terminus, the 427-residue chain is Histidinol dehydrogenase (427 aa).

NAD(+)-binding residues include Tyr-125, Gln-186, and Asn-209. Residues Ser-234, Gln-256, and His-259 each coordinate substrate. Residues Gln-256 and His-259 each coordinate Zn(2+). Catalysis depends on proton acceptor residues Glu-325 and His-326. 4 residues coordinate substrate: His-326, Asp-359, Glu-413, and His-419. Zn(2+) is bound at residue Asp-359. His-419 provides a ligand contact to Zn(2+).

This sequence belongs to the histidinol dehydrogenase family. Zn(2+) is required as a cofactor.

It carries out the reaction L-histidinol + 2 NAD(+) + H2O = L-histidine + 2 NADH + 3 H(+). It functions in the pathway amino-acid biosynthesis; L-histidine biosynthesis; L-histidine from 5-phospho-alpha-D-ribose 1-diphosphate: step 9/9. Catalyzes the sequential NAD-dependent oxidations of L-histidinol to L-histidinaldehyde and then to L-histidine. This is Histidinol dehydrogenase from Leptospira interrogans serogroup Icterohaemorrhagiae serovar copenhageni (strain Fiocruz L1-130).